A 483-amino-acid polypeptide reads, in one-letter code: V-type proton ATPase subunit H (483 aa).

A phosphoserine mark is found at Ser-59 and Ser-483.

This sequence belongs to the V-ATPase H subunit family. As to quaternary structure, V-ATPase is a heteromultimeric enzyme made up of two complexes: the ATP-hydrolytic V1 complex and the proton translocation V0 complex. The V1 complex consists of three catalytic AB heterodimers that form a heterohexamer, three peripheral stalks each consisting of EG heterodimers, one central rotor including subunits D and F, and the regulatory subunits C and H. The proton translocation complex V0 consists of the proton transport subunit a, a ring of proteolipid subunits c9c'', rotary subunit d, subunits e and f, and the accessory subunits ATP6AP1/Ac45 and ATP6AP2/PRR. Interacts with AP2M1.

It is found in the cytoplasmic vesicle. It localises to the clathrin-coated vesicle membrane. In terms of biological role, subunit of the V1 complex of vacuolar(H+)-ATPase (V-ATPase), a multisubunit enzyme composed of a peripheral complex (V1) that hydrolyzes ATP and a membrane integral complex (V0) that translocates protons. V-ATPase is responsible for acidifying and maintaining the pH of intracellular compartments and in some cell types, is targeted to the plasma membrane, where it is responsible for acidifying the extracellular environment. Subunit H is essential for V-ATPase activity, but not for the assembly of the complex. Involved in the endocytosis mediated by clathrin-coated pits, required for the formation of endosomes. The sequence is that of V-type proton ATPase subunit H (Atp6v1h) from Mus musculus (Mouse).